The sequence spans 604 residues: Proline--tRNA ligase (604 aa).

This sequence belongs to the class-II aminoacyl-tRNA synthetase family. ProS type 1 subfamily. Homodimer.

It is found in the cytoplasm. It carries out the reaction tRNA(Pro) + L-proline + ATP = L-prolyl-tRNA(Pro) + AMP + diphosphate. Catalyzes the attachment of proline to tRNA(Pro) in a two-step reaction: proline is first activated by ATP to form Pro-AMP and then transferred to the acceptor end of tRNA(Pro). As ProRS can inadvertently accommodate and process non-cognate amino acids such as alanine and cysteine, to avoid such errors it has two additional distinct editing activities against alanine. One activity is designated as 'pretransfer' editing and involves the tRNA(Pro)-independent hydrolysis of activated Ala-AMP. The other activity is designated 'posttransfer' editing and involves deacylation of mischarged Ala-tRNA(Pro). The misacylated Cys-tRNA(Pro) is not edited by ProRS. This Trichormus variabilis (strain ATCC 29413 / PCC 7937) (Anabaena variabilis) protein is Proline--tRNA ligase.